The chain runs to 29 residues: Cyclotide cter-K (29 aa).

Positions 1–29 form a cross-link, cyclopeptide (His-Asn); sequence HEPCGESCVFIPCITTVVGCSCKNKVCYN. Cystine bridges form between Cys4–Cys20, Cys8–Cys22, and Cys13–Cys27.

Post-translationally, contains 3 disulfide bonds. In terms of processing, this is a cyclic peptide.

In terms of biological role, probably participates in a plant defense mechanism. The sequence is that of Cyclotide cter-K from Clitoria ternatea (Butterfly pea).